The primary structure comprises 240 residues: Pyridoxine 5'-phosphate synthase (240 aa).

A 3-amino-2-oxopropyl phosphate-binding site is contributed by N6. 8-9 is a 1-deoxy-D-xylulose 5-phosphate binding site; the sequence is DH. R17 provides a ligand contact to 3-amino-2-oxopropyl phosphate. H42 (proton acceptor) is an active-site residue. Residues R44 and H49 each coordinate 1-deoxy-D-xylulose 5-phosphate. Catalysis depends on E69, which acts as the Proton acceptor. T99 contributes to the 1-deoxy-D-xylulose 5-phosphate binding site. H190 (proton donor) is an active-site residue. Residues G191 and 212–213 contribute to the 3-amino-2-oxopropyl phosphate site; that span reads GH.

This sequence belongs to the PNP synthase family. In terms of assembly, homooctamer; tetramer of dimers.

The protein resides in the cytoplasm. The enzyme catalyses 3-amino-2-oxopropyl phosphate + 1-deoxy-D-xylulose 5-phosphate = pyridoxine 5'-phosphate + phosphate + 2 H2O + H(+). It functions in the pathway cofactor biosynthesis; pyridoxine 5'-phosphate biosynthesis; pyridoxine 5'-phosphate from D-erythrose 4-phosphate: step 5/5. Its function is as follows. Catalyzes the complicated ring closure reaction between the two acyclic compounds 1-deoxy-D-xylulose-5-phosphate (DXP) and 3-amino-2-oxopropyl phosphate (1-amino-acetone-3-phosphate or AAP) to form pyridoxine 5'-phosphate (PNP) and inorganic phosphate. The sequence is that of Pyridoxine 5'-phosphate synthase from Pseudomonas entomophila (strain L48).